Consider the following 499-residue polypeptide: Anaerobic magnesium-protoporphyrin IX monomethyl ester cyclase (499 aa).

Residues 9 to 145 form the B12-binding domain; it reads PHPAIGSRIP…AALENHNDLN (137 aa). Residues 188-420 enclose the Radical SAM core domain; sequence YGGKQAVVIQ…PPWRIFLWVK (233 aa). Residues Cys202, Cys206, and Cys209 each coordinate [4Fe-4S] cluster.

It belongs to the BchE family. Requires [4Fe-4S] cluster as cofactor. Adenosylcob(III)alamin is required as a cofactor.

The enzyme catalyses Mg-protoporphyrin IX 13-monomethyl ester + 3 S-adenosyl-L-methionine + H2O = 3,8-divinyl protochlorophyllide a + 3 5'-deoxyadenosine + 3 L-methionine + 4 H(+). It participates in porphyrin-containing compound metabolism; bacteriochlorophyll biosynthesis (light-independent). In terms of biological role, involved in the tetrapyrrole biosynthetic pathways leading to chlorophyll and bacteriochlorophyll (BChl). Catalyzes the anaerobic formation of the isocyclic ring (E-ring) in Mg-protoporphyrin monomethyl ester (MPE) to yield protochlorophyllide a (PChlide a) via a six-electron oxidation and the formation of an oxo group at position C13 using oxygen from a water molecule. This is Anaerobic magnesium-protoporphyrin IX monomethyl ester cyclase from Synechocystis sp. (strain ATCC 27184 / PCC 6803 / Kazusa).